A 156-amino-acid polypeptide reads, in one-letter code: Ribosomal RNA large subunit methyltransferase H (156 aa).

Residues Leu-72, Gly-104, and 123–128 (FGAMVW) each bind S-adenosyl-L-methionine.

Belongs to the RNA methyltransferase RlmH family. As to quaternary structure, homodimer.

It is found in the cytoplasm. The catalysed reaction is pseudouridine(1915) in 23S rRNA + S-adenosyl-L-methionine = N(3)-methylpseudouridine(1915) in 23S rRNA + S-adenosyl-L-homocysteine + H(+). Functionally, specifically methylates the pseudouridine at position 1915 (m3Psi1915) in 23S rRNA. In Ruegeria pomeroyi (strain ATCC 700808 / DSM 15171 / DSS-3) (Silicibacter pomeroyi), this protein is Ribosomal RNA large subunit methyltransferase H.